Here is a 315-residue protein sequence, read N- to C-terminus: Methionyl-tRNA formyltransferase (315 aa).

112–115 (SLLP) is a (6S)-5,6,7,8-tetrahydrofolate binding site.

It belongs to the Fmt family.

The catalysed reaction is L-methionyl-tRNA(fMet) + (6R)-10-formyltetrahydrofolate = N-formyl-L-methionyl-tRNA(fMet) + (6S)-5,6,7,8-tetrahydrofolate + H(+). Its function is as follows. Attaches a formyl group to the free amino group of methionyl-tRNA(fMet). The formyl group appears to play a dual role in the initiator identity of N-formylmethionyl-tRNA by promoting its recognition by IF2 and preventing the misappropriation of this tRNA by the elongation apparatus. This Leptospira borgpetersenii serovar Hardjo-bovis (strain JB197) protein is Methionyl-tRNA formyltransferase.